The chain runs to 397 residues: Protein EMSY-LIKE 3 (397 aa).

Residues 1–40 are disordered; sequence MDYRPSDSSGTDDDLPPSHQGRYQRNARPTGNGRPSVLNS. Positions 50-137 constitute an ENT domain; that stretch reads METQIHLIEQ…PQLVHDAPSP (88 aa). Residues 81-107 adopt a coiled-coil conformation; it reads ESLITELRKELRVSDEEHRELLSRVNA. Disordered regions lie at residues 122–221 and 284–330; these read SLQS…SYDP and DPGI…TQNG. Positions 164-174 are enriched in polar residues; it reads LHPSMQPSSSA. A Nuclear localization signal motif is present at residues 175–182; it reads LRRGGPPP. Residues 363–389 are a coiled coil; sequence AEVEKAKRVLRDHELALMDAIAKLEEI. At Ser-390 the chain carries Phosphoserine.

Its subcellular location is the nucleus. Probably involved in the regulation of chromatin states. Contributes to basal immunity. This chain is Protein EMSY-LIKE 3, found in Arabidopsis thaliana (Mouse-ear cress).